Reading from the N-terminus, the 210-residue chain is Thiamine-phosphate synthase (210 aa).

Residues Gln34–Lys38 and Asn66 contribute to the 4-amino-2-methyl-5-(diphosphooxymethyl)pyrimidine site. Residues Asp67 and Asp86 each coordinate Mg(2+). Ser105 lines the 4-amino-2-methyl-5-(diphosphooxymethyl)pyrimidine pocket. Residue Thr131–Ser133 participates in 2-[(2R,5Z)-2-carboxy-4-methylthiazol-5(2H)-ylidene]ethyl phosphate binding. Position 134 (Lys134) interacts with 4-amino-2-methyl-5-(diphosphooxymethyl)pyrimidine. Gly162 contacts 2-[(2R,5Z)-2-carboxy-4-methylthiazol-5(2H)-ylidene]ethyl phosphate.

Belongs to the thiamine-phosphate synthase family. It depends on Mg(2+) as a cofactor.

It catalyses the reaction 2-[(2R,5Z)-2-carboxy-4-methylthiazol-5(2H)-ylidene]ethyl phosphate + 4-amino-2-methyl-5-(diphosphooxymethyl)pyrimidine + 2 H(+) = thiamine phosphate + CO2 + diphosphate. It carries out the reaction 2-(2-carboxy-4-methylthiazol-5-yl)ethyl phosphate + 4-amino-2-methyl-5-(diphosphooxymethyl)pyrimidine + 2 H(+) = thiamine phosphate + CO2 + diphosphate. The enzyme catalyses 4-methyl-5-(2-phosphooxyethyl)-thiazole + 4-amino-2-methyl-5-(diphosphooxymethyl)pyrimidine + H(+) = thiamine phosphate + diphosphate. It functions in the pathway cofactor biosynthesis; thiamine diphosphate biosynthesis; thiamine phosphate from 4-amino-2-methyl-5-diphosphomethylpyrimidine and 4-methyl-5-(2-phosphoethyl)-thiazole: step 1/1. Condenses 4-methyl-5-(beta-hydroxyethyl)thiazole monophosphate (THZ-P) and 2-methyl-4-amino-5-hydroxymethyl pyrimidine pyrophosphate (HMP-PP) to form thiamine monophosphate (TMP). This is Thiamine-phosphate synthase from Chlorobium limicola (strain DSM 245 / NBRC 103803 / 6330).